A 386-amino-acid chain; its full sequence is Tumor necrosis factor receptor superfamily member 10D (386 aa).

Disordered regions lie at residues methionine 1–alanine 25 and aspartate 62–serine 90. Residues methionine 1–serine 55 form the signal peptide. Topologically, residues alanine 56–histidine 211 are extracellular. TNFR-Cys repeat units lie at residues isoleucine 58–asparagine 97, proline 98–cysteine 139, and glutamine 140–cysteine 180. The segment covering valine 64–arginine 75 has biased composition (polar residues). Disulfide bonds link cysteine 83-cysteine 96, cysteine 99-cysteine 115, cysteine 118-cysteine 131, cysteine 121-cysteine 139, cysteine 141-cysteine 155, cysteine 158-cysteine 172, and cysteine 162-cysteine 180. Asparagine 127 carries an N-linked (GlcNAc...) asparagine glycan. Asparagine 182 is a glycosylation site (N-linked (GlcNAc...) asparagine). A helical transmembrane segment spans residues tyrosine 212–cysteine 232. At arginine 233–leucine 386 the chain is on the cytoplasmic side. In terms of domain architecture, Death; truncated spans serine 340 to leucine 366.

Widely expressed, in particular in fetal kidney, lung and liver, and in adult testis and liver. Also expressed in peripheral blood leukocytes, colon and small intestine, ovary, prostate, thymus, spleen, pancreas, kidney, lung, placenta and heart.

It is found in the membrane. Functionally, receptor for the cytotoxic ligand TRAIL. Contains a truncated death domain and hence is not capable of inducing apoptosis but protects against TRAIL-mediated apoptosis. Reports are contradictory with regards to its ability to induce the NF-kappa-B pathway. According to PubMed:9382840, it cannot but according to PubMed:9430226, it can induce the NF-kappa-B pathway. The polypeptide is Tumor necrosis factor receptor superfamily member 10D (Homo sapiens (Human)).